Here is a 206-residue protein sequence, read N- to C-terminus: MARYLGPKCKLSRREGTDLFLKSGVKANDEKCKMNTAPGQHGARRARLSDYGLQLREKQKVRRMYGILEGQFKKYYVEASRRKGNTGATLLELLESRLDNVVYRMGFAATRAEARQLVVHKGIMVNGHTCNVPSAQVKAGDVVAVREKAKKQLRIQNAVELAKHRKELSWIDVNTDSLEGTMKSSPDRSELSADINEQLIIELYSK.

The S4 RNA-binding domain occupies 96–158 (SRLDNVVYRM…AKKQLRIQNA (63 aa)).

The protein belongs to the universal ribosomal protein uS4 family. Part of the 30S ribosomal subunit. Contacts protein S5. The interaction surface between S4 and S5 is involved in control of translational fidelity.

Functionally, one of the primary rRNA binding proteins, it binds directly to 16S rRNA where it nucleates assembly of the body of the 30S subunit. In terms of biological role, with S5 and S12 plays an important role in translational accuracy. The chain is Small ribosomal subunit protein uS4 from Francisella tularensis subsp. tularensis (strain FSC 198).